Here is an 883-residue protein sequence, read N- to C-terminus: Histidine--tRNA ligase, cytoplasmic (883 aa).

Belongs to the class-II aminoacyl-tRNA synthetase family.

The protein localises to the cytoplasm. It is found in the cytosol. The catalysed reaction is tRNA(His) + L-histidine + ATP = L-histidyl-tRNA(His) + AMP + diphosphate + H(+). The protein is Histidine--tRNA ligase, cytoplasmic of Arabidopsis thaliana (Mouse-ear cress).